The following is a 263-amino-acid chain: Bidirectional sugar transporter SWEET3 (263 aa).

The Extracellular portion of the chain corresponds to 1 to 7; sequence MGDKLRL. The helical transmembrane segment at 8 to 28 threads the bilayer; the sequence is SIGILGNGASLLLYTAPIVTF. Positions 9–97 constitute a MtN3/slv 1 domain; sequence IGILGNGASL…FIYFYYASPK (89 aa). Over 29–42 the chain is Cytoplasmic; that stretch reads SRVFKKKSTEEFSC. A helical transmembrane segment spans residues 43–63; the sequence is FPYVMTLFNCLIYTWYGLPIV. Over 64–71 the chain is Extracellular; that stretch reads SHLWENLP. The chain crosses the membrane as a helical span at residues 72–92; it reads LVTINGVGILLESIFIFIYFY. Residues 93–103 lie on the Cytoplasmic side of the membrane; it reads YASPKEKIKVG. Residues 104-124 form a helical membrane-spanning segment; it reads VTFVPVIVGFGLTTAISALVF. At 125-132 the chain is on the extracellular side; sequence DDHRHRKS. Residues 133–153 form a helical membrane-spanning segment; sequence FVGSVGLVASISMYGSPLVVM. The MtN3/slv 2 domain maps to 133–217; that stretch reads FVGSVGLVAS…ILYFKYKNKK (85 aa). Over 154–165 the chain is Cytoplasmic; the sequence is KKVIETRSVEYM. Residues 166 to 186 form a helical membrane-spanning segment; sequence PFYLSFFSFLASSLWLAYGLL. Residues 187 to 190 are Extracellular-facing; sequence SHDL. A helical membrane pass occupies residues 191–211; sequence FLASPNMVATPLGILQLILYF. Topologically, residues 212 to 263 are cytoplasmic; sequence KYKNKKDLAPTTMVITKRNDHDDKNKATLEFVVDVDRNSDTNEKNSNNASSI.

Belongs to the SWEET sugar transporter family. Forms heterooligomers with SWEET11, SWEET13 and SWEET17.

The protein localises to the cell membrane. Its function is as follows. Mediates both low-affinity uptake and efflux of sugar across the plasma membrane. This chain is Bidirectional sugar transporter SWEET3, found in Arabidopsis thaliana (Mouse-ear cress).